A 103-amino-acid chain; its full sequence is Large ribosomal subunit protein eL14 (103 aa).

Belongs to the eukaryotic ribosomal protein eL14 family.

The polypeptide is Large ribosomal subunit protein eL14 (Pyrobaculum islandicum (strain DSM 4184 / JCM 9189 / GEO3)).